Here is a 586-residue protein sequence, read N- to C-terminus: MDYLKTVVPSQLMAERGANLVVINPGSSNVRIGFASQDVPFNIPHCIARHITQRKDDTPRLSVRDKMLNCHATPSQNAERERAYDIIASLLKIPFLDEEMPSANQALPPKMGRVDALSSQQNKDDSKFTWTDVMDRSIKSSTPIVDKDADVDPLQRSTPDDTEPNSEENMYKEIIFGEDALKIPPSESYCLSHPIRRGHFNISQDYSLHQVLEDLRTIWNWILTEKLHINPRDRHLYSAILVLGETFDNREIKEMLSIVLCDLGFSTAVIHQEALAAAFGNGLSTSCVVNIGAQVTQVVCVEDGVALPHTALALPYGGDDISRCLLWVQRRHRTWPNFQTDPVNRPIDMLMLNKLKESYSQIRSGSFDAVSVVHSYEHEKSVGHQKTKLSALNVPPMGLLYPRVLVPEEYPPPPRSWFQDYDDMLEDTWQTSDSLYSSGNGGFGMWDNYPMFPTRLKKFDNIGLVEAIVSSILSTGRIELQRKLFCSIQLVGGTASTAGLAPVLEQRVLNTIPSNQPIEKAEVLQSRSYPLFVPWKGGVILGVLDIGRDAWIHREDWAKNGVHIGSGRKYRDSYFLQAQAMCYYNS.

The disordered stretch occupies residues 141–169 (STPIVDKDADVDPLQRSTPDDTEPNSEEN).

This sequence belongs to the actin family. ARP8 subfamily.

The protein is Actin-related protein 9 (ARP9) of Oryza sativa subsp. indica (Rice).